The sequence spans 403 residues: Phosphoglycerate kinase (403 aa).

Residues Asp-22–Asn-24, Arg-37, His-60–Asn-63, Arg-119, and Arg-152 contribute to the substrate site. ATP contacts are provided by residues Lys-202, Glu-325, and Gly-355–Thr-358.

This sequence belongs to the phosphoglycerate kinase family. In terms of assembly, monomer.

It localises to the cytoplasm. The catalysed reaction is (2R)-3-phosphoglycerate + ATP = (2R)-3-phospho-glyceroyl phosphate + ADP. Its pathway is carbohydrate degradation; glycolysis; pyruvate from D-glyceraldehyde 3-phosphate: step 2/5. This Orientia tsutsugamushi (strain Boryong) (Rickettsia tsutsugamushi) protein is Phosphoglycerate kinase.